A 501-amino-acid chain; its full sequence is ATP synthase subunit alpha (501 aa).

169 to 176 contributes to the ATP binding site; it reads GDRQTGKT.

This sequence belongs to the ATPase alpha/beta chains family. F-type ATPases have 2 components, CF(1) - the catalytic core - and CF(0) - the membrane proton channel. CF(1) has five subunits: alpha(3), beta(3), gamma(1), delta(1), epsilon(1). CF(0) has three main subunits: a(1), b(2) and c(9-12). The alpha and beta chains form an alternating ring which encloses part of the gamma chain. CF(1) is attached to CF(0) by a central stalk formed by the gamma and epsilon chains, while a peripheral stalk is formed by the delta and b chains.

Its subcellular location is the cell membrane. The enzyme catalyses ATP + H2O + 4 H(+)(in) = ADP + phosphate + 5 H(+)(out). In terms of biological role, produces ATP from ADP in the presence of a proton gradient across the membrane. The alpha chain is a regulatory subunit. This is ATP synthase subunit alpha from Streptococcus uberis (strain ATCC BAA-854 / 0140J).